We begin with the raw amino-acid sequence, 397 residues long: Elongation factor Tu (397 aa).

Residues 10-207 (KPHVNVGTVG…AIDAYVPDPV (198 aa)) enclose the tr-type G domain. Residues 19 to 26 (GHIDHGKT) form a G1 region. 19–26 (GHIDHGKT) lines the GTP pocket. Thr-26 provides a ligand contact to Mg(2+). A G2 region spans residues 60 to 64 (GITIA). The segment at 81–84 (DCPG) is G3. Residues 81 to 85 (DCPGH) and 136 to 139 (NKVD) each bind GTP. The tract at residues 136-139 (NKVD) is G4. Positions 174-176 (SAL) are G5.

This sequence belongs to the TRAFAC class translation factor GTPase superfamily. Classic translation factor GTPase family. EF-Tu/EF-1A subfamily. As to quaternary structure, monomer.

Its subcellular location is the cytoplasm. The catalysed reaction is GTP + H2O = GDP + phosphate + H(+). GTP hydrolase that promotes the GTP-dependent binding of aminoacyl-tRNA to the A-site of ribosomes during protein biosynthesis. This chain is Elongation factor Tu, found in Syntrophobacter fumaroxidans (strain DSM 10017 / MPOB).